Reading from the N-terminus, the 50-residue chain is GCKGKYEECTRDSDCCDEKNRSGRKLRCLTQCDEGGCLKYRQCLFYGGLQ.

This sequence belongs to the sea anemone type 5 potassium channel toxin family. Contains 4 disulfide bonds.

The protein localises to the secreted. The protein resides in the nematocyst. In terms of biological role, inhibits voltage-gated potassium channels (Kv1/KCNA). Is potent on Drosophila Shaker IR channels (IC(50)=94.25 nM), and rKv1.2/KCNA2 (IC(50)=172.59 nM), and moderately active on hKv1.3/KCNA3 (IC(50)=1006.48 nM), rKv1.6/KCNA6 (IC(50)=2245.93 nM), and Kv1.1/KCNA1 (IC(50) around 3 uM). In vivo, induces a rapid increase in swimming speed on zebrafish larvae, as well as death which occurs between 2 and 18 hours later. Also paralyzes swimming crabs (C.danae) when injected at the junction between the body and the walking leg. This is Kappa-actitoxin-Bcs4a from Bunodosoma caissarum (Sea anemone).